A 426-amino-acid chain; its full sequence is Probable M18 family aminopeptidase 2 (426 aa).

His-79, His-156, and His-399 together coordinate Zn(2+).

The protein belongs to the peptidase M18 family. The cofactor is Zn(2+).

The chain is Probable M18 family aminopeptidase 2 (apeB) from Mycobacterium leprae (strain TN).